A 197-amino-acid chain; its full sequence is Beta-crystallin A2 (197 aa).

The interval 1–11 (MSSASAPGPAP) is N-terminal arm. Beta/gamma crystallin 'Greek key' domains lie at 12 to 52 (ACLT…KVEN) and 53 to 99 (GAWV…RPVL). The segment at 100–105 (CANHSD) is connecting peptide. Beta/gamma crystallin 'Greek key' domains follow at residues 106 to 147 (SRVT…KVSS) and 148 to 196 (GAWV…RRVQ).

The protein belongs to the beta/gamma-crystallin family. As to quaternary structure, homo/heterodimer, or complexes of higher-order. The structure of beta-crystallin oligomers seems to be stabilized through interactions between the N-terminal arms.

Functionally, crystallins are the dominant structural components of the vertebrate eye lens. This chain is Beta-crystallin A2 (CRYBA2), found in Oryctolagus cuniculus (Rabbit).